The sequence spans 93 residues: uncharacterized protein (93 aa).

A helical membrane pass occupies residues 12–32 (VVGGLSFWTFSAGLIMIVNAL). A disordered region spans residues 47 to 66 (TANANGSDDDNENKNNSYRS).

It is found in the cell membrane. This is an uncharacterized protein from Mycoplasma genitalium (strain ATCC 33530 / DSM 19775 / NCTC 10195 / G37) (Mycoplasmoides genitalium).